Consider the following 466-residue polypeptide: UDP-N-acetylmuramoylalanine--D-glutamate ligase (466 aa).

Residue 121–127 (GTNGKST) participates in ATP binding.

Belongs to the MurCDEF family.

It localises to the cytoplasm. It catalyses the reaction UDP-N-acetyl-alpha-D-muramoyl-L-alanine + D-glutamate + ATP = UDP-N-acetyl-alpha-D-muramoyl-L-alanyl-D-glutamate + ADP + phosphate + H(+). Its pathway is cell wall biogenesis; peptidoglycan biosynthesis. Its function is as follows. Cell wall formation. Catalyzes the addition of glutamate to the nucleotide precursor UDP-N-acetylmuramoyl-L-alanine (UMA). The protein is UDP-N-acetylmuramoylalanine--D-glutamate ligase of Nitrobacter hamburgensis (strain DSM 10229 / NCIMB 13809 / X14).